The sequence spans 128 residues: Aspartate 1-decarboxylase (128 aa).

The active-site Schiff-base intermediate with substrate; via pyruvic acid is S25. S25 carries the post-translational modification Pyruvic acid (Ser). T57 serves as a coordination point for substrate. The active-site Proton donor is the Y58. 73–75 contacts substrate; sequence GSA.

This sequence belongs to the PanD family. In terms of assembly, heterooctamer of four alpha and four beta subunits. Pyruvate is required as a cofactor. Is synthesized initially as an inactive proenzyme, which is activated by self-cleavage at a specific serine bond to produce a beta-subunit with a hydroxyl group at its C-terminus and an alpha-subunit with a pyruvoyl group at its N-terminus.

The protein resides in the cytoplasm. It carries out the reaction L-aspartate + H(+) = beta-alanine + CO2. The protein operates within cofactor biosynthesis; (R)-pantothenate biosynthesis; beta-alanine from L-aspartate: step 1/1. Catalyzes the pyruvoyl-dependent decarboxylation of aspartate to produce beta-alanine. The chain is Aspartate 1-decarboxylase from Paraburkholderia xenovorans (strain LB400).